The primary structure comprises 128 residues: Lymphocyte antigen 6D (128 aa).

A signal peptide spans 1-20; it reads MKTVLLFLVALAAAAGPAQA. The region spanning 21–108 is the UPAR/Ly6 domain; that stretch reads LRCHVCTSSS…WQSAAPARTS (88 aa). 5 cysteine pairs are disulfide-bonded: Cys23/Cys45, Cys26/Cys32, Cys38/Cys63, Cys67/Cys86, and Cys87/Cys92. Ser98 carries the GPI-anchor amidated serine lipid modification. The propeptide at 99–128 is removed in mature form; sequence WQSAAPARTSAHLGLALACGLLALLWAPGL.

It localises to the cell membrane. In terms of biological role, may act as a specification marker at earliest stage specification of lymphocytes between B- and T-cell development. Marks the earliest stage of B-cell specification. This Bos taurus (Bovine) protein is Lymphocyte antigen 6D (LY6D).